Here is a 254-residue protein sequence, read N- to C-terminus: Attacin-A (254 aa).

Positions 1–18 (MFTYKLILGLVLVVSASA) are cleaved as a signal peptide. A propeptide spanning residues 19–62 (RYLVFEDLEGESYLVPNQAEDEQVLEGEPFYENAVQLASPRVRR) is cleaved from the precursor.

It belongs to the attacin/sarcotoxin-2 family.

It is found in the secreted. Hemolymph antibacterial protein. The polypeptide is Attacin-A (Trichoplusia ni (Cabbage looper)).